We begin with the raw amino-acid sequence, 379 residues long: Cytochrome b (379 aa).

A run of 4 helical transmembrane segments spans residues 33–53, 77–98, 113–133, and 178–198; these read FGSLLGMCLMIQILTGLFLAM, WLIRYLHANGASMFFICLFIHV, WNIGIILFLTTMATAFVGYVL, and FFAFHFILPFIITAFALVHLL. The heme b site is built by histidine 83 and histidine 97. Residues histidine 182 and histidine 196 each contribute to the heme b site. Histidine 201 is a binding site for a ubiquinone. Transmembrane regions (helical) follow at residues 226–246, 288–308, 320–340, and 347–367; these read TKDLLGIFLLLLVLMILALFF, LGGVLALVLSILILAAFPLLN, ITQVIYWIFIXNLLVLTWIGG, and XTMIGQIASITYFAIIIILIP.

This sequence belongs to the cytochrome b family. The cytochrome bc1 complex contains 11 subunits: 3 respiratory subunits (MT-CYB, CYC1 and UQCRFS1), 2 core proteins (UQCRC1 and UQCRC2) and 6 low-molecular weight proteins (UQCRH/QCR6, UQCRB/QCR7, UQCRQ/QCR8, UQCR10/QCR9, UQCR11/QCR10 and a cleavage product of UQCRFS1). This cytochrome bc1 complex then forms a dimer. Heme b is required as a cofactor.

The protein resides in the mitochondrion inner membrane. Its function is as follows. Component of the ubiquinol-cytochrome c reductase complex (complex III or cytochrome b-c1 complex) that is part of the mitochondrial respiratory chain. The b-c1 complex mediates electron transfer from ubiquinol to cytochrome c. Contributes to the generation of a proton gradient across the mitochondrial membrane that is then used for ATP synthesis. This is Cytochrome b (MT-CYB) from Akodon boliviensis (Bolivian grass mouse).